The primary structure comprises 259 residues: Protein BEAN1 (259 aa).

A helical membrane pass occupies residues 36–56 (VLVASAVIGVVIILSCITIIV). Residues 71–89 (RHRHHRHHHHHHHHRRRRH) are compositionally biased toward basic residues. Disordered stretches follow at residues 71-91 (RHRHHRHHHHHHHHRRRRHRE) and 152-259 (VGPG…ERIV). Polar residues predominate over residues 171-187 (LTDSCPTLDGTSDSGSG). Residues 221 to 230 (GAGPPSGLLP) show a composition bias toward low complexity.

As to quaternary structure, interacts with NEDD4.

Its subcellular location is the membrane. This Homo sapiens (Human) protein is Protein BEAN1 (BEAN1).